The sequence spans 81 residues: Small ribosomal subunit protein bS18 (81 aa).

This sequence belongs to the bacterial ribosomal protein bS18 family. In terms of assembly, part of the 30S ribosomal subunit. Forms a tight heterodimer with protein bS6.

In terms of biological role, binds as a heterodimer with protein bS6 to the central domain of the 16S rRNA, where it helps stabilize the platform of the 30S subunit. This is Small ribosomal subunit protein bS18 from Lactococcus lactis subsp. cremoris (strain MG1363).